The sequence spans 526 residues: Maturase K (526 aa).

Belongs to the intron maturase 2 family. MatK subfamily.

Its subcellular location is the plastid. The protein resides in the chloroplast. Functionally, usually encoded in the trnK tRNA gene intron. Probably assists in splicing its own and other chloroplast group II introns. The chain is Maturase K from Iris pseudacorus (Yellow flag).